A 952-amino-acid polypeptide reads, in one-letter code: Protein translocase subunit SecA (952 aa).

Residues glutamine 135, 153–157 (GEGKT), and aspartate 575 contribute to the ATP site. Residues 907-921 (AAPAAAIPGVSAKAA) are compositionally biased toward low complexity. The disordered stretch occupies residues 907 to 946 (AAPAAAIPGVSAKAATQSTTPAAKEIGRNDPCPCGSGKKY). Zn(2+)-binding residues include cysteine 938, cysteine 940, cysteine 949, and cysteine 950.

The protein belongs to the SecA family. Monomer and homodimer. Part of the essential Sec protein translocation apparatus which comprises SecA, SecYEG and auxiliary proteins SecDF. Other proteins may also be involved. It depends on Zn(2+) as a cofactor.

The protein localises to the cell membrane. It is found in the cytoplasm. It carries out the reaction ATP + H2O + cellular proteinSide 1 = ADP + phosphate + cellular proteinSide 2.. Functionally, part of the Sec protein translocase complex. Interacts with the SecYEG preprotein conducting channel. Has a central role in coupling the hydrolysis of ATP to the transfer of proteins into and across the cell membrane, serving as an ATP-driven molecular motor driving the stepwise translocation of polypeptide chains across the membrane. The sequence is that of Protein translocase subunit SecA from Dehalococcoides mccartyi (strain CBDB1).